The following is a 509-amino-acid chain: MKVSVTKNTIQSLKLDAVAFPISKSEKDNALKEVAAKTGVTVALFEKDFSADESSLMMLYPDLELCAFKRVFLVGLGDKPGLDACRSAMASLAKKVKELKLATVGVDLSGAKALSETANDSVDYIAQTAVEGFHSGLYDFNQLKTNRVKELKSGKSEDDEPKQAVEELVLATDAKILSDVKKGAETGDIIATSQAMVRDLVNSPSNYMTALDFAERVKASGEKHGFKVTVFDKAKIEELKMGGLLGVNKGSVIPPTFSIMEYKPEGESLGRVALVGKGVMFDTGGISIKPSSGMGDMKADMAGGADVLGAVEAAARLKLPLEVIGIVPATDNMPSGSAQNPGDVLTTYSGITVEVDNTDAEGRLILADALTYVKETYNPDTIIDLATLTGACIVALGETTAGLFSNNDELAEKLYKAGQRAGEKVWRMPIWDEYDKLIKSNVADVKNVGGRSAGSITAAKFLEKFVGDHSSWAHLDIAGPAFPGMTNGGGSGSTGFGVRLLVELMRNWK.

Residues lysine 277 and aspartate 282 each contribute to the Mn(2+) site. The active site involves lysine 289. Residues aspartate 300, aspartate 359, and glutamate 361 each contribute to the Mn(2+) site. Residue arginine 363 is part of the active site.

The protein belongs to the peptidase M17 family. The cofactor is Mn(2+).

The protein resides in the cytoplasm. It catalyses the reaction Release of an N-terminal amino acid, Xaa-|-Yaa-, in which Xaa is preferably Leu, but may be other amino acids including Pro although not Arg or Lys, and Yaa may be Pro. Amino acid amides and methyl esters are also readily hydrolyzed, but rates on arylamides are exceedingly low.. It carries out the reaction Release of an N-terminal amino acid, preferentially leucine, but not glutamic or aspartic acids.. Functionally, presumably involved in the processing and regular turnover of intracellular proteins. Catalyzes the removal of unsubstituted N-terminal amino acids from various peptides. The protein is Probable cytosol aminopeptidase of Chloroherpeton thalassium (strain ATCC 35110 / GB-78).